Here is a 66-residue protein sequence, read N- to C-terminus: Large ribosomal subunit protein uL29 (66 aa).

The protein belongs to the universal ribosomal protein uL29 family.

This is Large ribosomal subunit protein uL29 from Thermococcus gammatolerans (strain DSM 15229 / JCM 11827 / EJ3).